The sequence spans 708 residues: Glycine--tRNA ligase beta subunit (708 aa).

The protein belongs to the class-II aminoacyl-tRNA synthetase family. In terms of assembly, tetramer of two alpha and two beta subunits.

The protein resides in the cytoplasm. It catalyses the reaction tRNA(Gly) + glycine + ATP = glycyl-tRNA(Gly) + AMP + diphosphate. This chain is Glycine--tRNA ligase beta subunit, found in Paracidovorax citrulli (strain AAC00-1) (Acidovorax citrulli).